A 508-amino-acid polypeptide reads, in one-letter code: Proline--tRNA ligase 2 (508 aa).

Belongs to the class-II aminoacyl-tRNA synthetase family. ProS type 3 subfamily. As to quaternary structure, homodimer.

The protein localises to the cytoplasm. The catalysed reaction is tRNA(Pro) + L-proline + ATP = L-prolyl-tRNA(Pro) + AMP + diphosphate. Functionally, catalyzes the attachment of proline to tRNA(Pro) in a two-step reaction: proline is first activated by ATP to form Pro-AMP and then transferred to the acceptor end of tRNA(Pro). The polypeptide is Proline--tRNA ligase 2 (Bacillus anthracis).